A 277-amino-acid chain; its full sequence is Elongation factor 1-delta (277 aa).

At alanine 2 the chain carries N-acetylalanine. Lysine 17 carries the N6-acetyllysine modification. Residues serine 37, serine 44, serine 60, serine 86, and serine 106 each carry the phosphoserine modification. Lysine 107 bears the N6-acetyllysine mark. The tract at residues 113-171 (SALEKSSPAHRATTPQTQHVSPMRQVEPPSRKAATATEDDEDDDIDLFGSDEEEDKEAA) is disordered. Lysine 117 is subject to N6-acetyllysine; alternate. Position 117 is an N6-succinyllysine; alternate (lysine 117). Serine 119 is modified (phosphoserine). Phosphothreonine is present on threonine 129. A Phosphoserine modification is found at serine 133. The residue at position 147 (threonine 147) is a Phosphothreonine. The segment covering 149–168 (TEDDEDDDIDLFGSDEEEDK) has biased composition (acidic residues). Serine 162 bears the Phosphoserine; by CK2 mark.

It belongs to the EF-1-beta/EF-1-delta family. As to quaternary structure, EF-1 is composed of 4 subunits: alpha, beta, delta, and gamma.

EF-1-beta and EF-1-delta stimulate the exchange of GDP bound to EF-1-alpha to GTP. In Ovis aries (Sheep), this protein is Elongation factor 1-delta (EEF1D).